A 339-amino-acid chain; its full sequence is Agamous-like MADS-box protein AGL86 (339 aa).

In terms of domain architecture, MADS-box spans methionine 1 to glutamate 60. A coiled-coil region spans residues threonine 86 to arginine 112.

Interacts with AGL61/DIANA and AGL62.

The protein resides in the nucleus. Its function is as follows. Probable transcription factor. This is Agamous-like MADS-box protein AGL86 (AGL86) from Arabidopsis thaliana (Mouse-ear cress).